Consider the following 547-residue polypeptide: T-complex protein 1 subunit alpha (547 aa).

It belongs to the TCP-1 chaperonin family. In terms of assembly, heterooligomeric complex of about 850 to 900 kDa that forms two stacked rings, 12 to 16 nm in diameter.

The protein localises to the cytoplasm. Molecular chaperone; assists the folding of proteins upon ATP hydrolysis. Known to play a role, in vitro, in the folding of actin and tubulin. The polypeptide is T-complex protein 1 subunit alpha (Tetrahymena pyriformis).